The following is a 213-amino-acid chain: MGQKIHPLGFRLGVTQEHRAHWFAKPSEYKFLVEEDNYIRKYLNAKLANAGVARIDIQRKADQVEIEIYTARPGLVVGRTGKGIENLIRDLQDKLRNKRKFRITITYLQEPDLESTLIGEFIAQRLQERKPFRRAIRQAVQRAKRAGVQGIKIQVAGRLNGAEIARSEWVREGRVPLQTLRADIDYSHCQAKTIYGIIGIKVWIFKGEKISIN.

Residues 39 to 109 (IRKYLNAKLA…KFRITITYLQ (71 aa)) enclose the KH type-2 domain.

The protein belongs to the universal ribosomal protein uS3 family. Part of the 30S ribosomal subunit.

It localises to the plastid. The protein localises to the chloroplast. The sequence is that of Small ribosomal subunit protein uS3c (rps3) from Mesostigma viride (Green alga).